The chain runs to 413 residues: Protein CDKN2AIP homolog B (413 aa).

The XRN2-binding (XTBD) domain occupies 21–118 (LERVRGQCES…TTRDELVAKV (98 aa)). The disordered stretch occupies residues 118–266 (VKKRGNSSSN…PTRRFTTEHT (149 aa)). Basic and acidic residues predominate over residues 183 to 193 (NKREAHSRTDV).

Belongs to the CARF family.

The protein localises to the nucleus. It localises to the nucleoplasm. In terms of biological role, may regulate DNA damage response and cell proliferation. The protein is Protein CDKN2AIP homolog B (cdkn2aip-b) of Xenopus laevis (African clawed frog).